A 358-amino-acid polypeptide reads, in one-letter code: 1-deoxy-D-xylulose 5-phosphate reductoisomerase (358 aa).

Residues threonine 7, glycine 8, serine 9, isoleucine 10, glycine 31, asparagine 33, and asparagine 114 each contribute to the NADPH site. Lysine 115 is a 1-deoxy-D-xylulose 5-phosphate binding site. Glutamate 116 contacts NADPH. Aspartate 134 provides a ligand contact to Mn(2+). Serine 135, glutamate 136, serine 157, and histidine 180 together coordinate 1-deoxy-D-xylulose 5-phosphate. Glutamate 136 is a Mn(2+) binding site. Glycine 186 contributes to the NADPH binding site. Positions 193, 198, 199, and 202 each coordinate 1-deoxy-D-xylulose 5-phosphate. Glutamate 202 lines the Mn(2+) pocket.

This sequence belongs to the DXR family. Mg(2+) serves as cofactor. Mn(2+) is required as a cofactor.

The enzyme catalyses 2-C-methyl-D-erythritol 4-phosphate + NADP(+) = 1-deoxy-D-xylulose 5-phosphate + NADPH + H(+). It participates in isoprenoid biosynthesis; isopentenyl diphosphate biosynthesis via DXP pathway; isopentenyl diphosphate from 1-deoxy-D-xylulose 5-phosphate: step 1/6. Catalyzes the NADPH-dependent rearrangement and reduction of 1-deoxy-D-xylulose-5-phosphate (DXP) to 2-C-methyl-D-erythritol 4-phosphate (MEP). The sequence is that of 1-deoxy-D-xylulose 5-phosphate reductoisomerase from Wolinella succinogenes (strain ATCC 29543 / DSM 1740 / CCUG 13145 / JCM 31913 / LMG 7466 / NCTC 11488 / FDC 602W) (Vibrio succinogenes).